Here is a 583-residue protein sequence, read N- to C-terminus: Pentatricopeptide repeat-containing protein At3g59040 (583 aa).

PPR repeat units follow at residues 138-172 (SEID…GSTP), 173-207 (NVIS…GPEP), 208-242 (SAIT…KKSP), 246-280 (DQKM…GVPQ), 281-312 (STVT…DIQP), 313-347 (DVVS…GVRP), 348-382 (THKA…RIFP), 383-417 (DLWS…GFEP), 418-452 (NIVT…GIKA), and 453-487 (NQTI…GVPP). Residues 525–583 (VYGSDDDEEGVEDISSESSDDEDEGDDDDDDARETVLYDKPQEGSLGYGSLQTEELVGL) form a disordered region. The segment covering 528 to 556 (SDDDEEGVEDISSESSDDEDEGDDDDDDA) has biased composition (acidic residues). Basic and acidic residues predominate over residues 557-566 (RETVLYDKPQ).

Belongs to the PPR family. P subfamily.

This Arabidopsis thaliana (Mouse-ear cress) protein is Pentatricopeptide repeat-containing protein At3g59040.